The sequence spans 445 residues: MCSIGEDDFGDEGGVHAMKEESPLPEGATTIEQEICRKCNDQRAVLKLNQKEPQCRECFLHYVRHKFRASLGATKIVRRGSKVMVVFNGAPENVVMLDMVRHGLEQEAFKKLRVDPVVVFVGEDFIGRDQEGYEQSVREKVQILRQFGFPAYYTVLGAQDSCSIEDNCLAGKFIGDQDKVTKVLQGIKSITSKQDFIVQTRKQTYKAIAKKLECGYIFLSSIGLELAKTLLSDVSLGRGKSLALDIAFCDDRDEERKIIRPMRDLNPEEIEYYLKFAENQLQSVAIVDPYLDKSSLQNLTSKFVDGLQLSFPSTVSTVFRTGDKLGAEKIPTCDNQLEDDDHFATLFDKSLKLESNAEEPRKCKFCHSALDYRDSTTLFATEFSRMVSSRINVQLSHEEIIESTKLMEQDACKLVNAELEDDEMRQLKRELCHACRNILVDFDGK.

Residues 1–11 (MCSIGEDDFGD) show a composition bias toward acidic residues. Positions 1-26 (MCSIGEDDFGDEGGVHAMKEESPLPE) are disordered. The segment covering 13-22 (GGVHAMKEES) has biased composition (basic and acidic residues).

It belongs to the CTU2/NCS2 family.

It is found in the cytoplasm. It participates in tRNA modification; 5-methoxycarbonylmethyl-2-thiouridine-tRNA biosynthesis. Plays a central role in 2-thiolation of mcm(5)S(2)U at tRNA wobble positions of tRNA(Lys), tRNA(Glu) and tRNA(Gln). May act by forming a heterodimer with NCS6/CTU1 that ligates sulfur from thiocarboxylated URM1 onto the uridine of tRNAs at wobble position. The chain is Cytoplasmic tRNA 2-thiolation protein 2 from Aedes aegypti (Yellowfever mosquito).